An 89-amino-acid polypeptide reads, in one-letter code: N.vectensis toxin 7 (89 aa).

Residues 1–21 (MASFFKIAVICLVMLVVCSNA) form the signal peptide. 3 disulfides stabilise this stretch: C44/C77, C46/C69, and C62/C78.

In terms of tissue distribution, expressed in ectodermal gland cells.

Probable toxin. In Nematostella vectensis (Starlet sea anemone), this protein is N.vectensis toxin 7.